A 197-amino-acid chain; its full sequence is Dephospho-CoA kinase (197 aa).

The 196-residue stretch at 2–197 (IIGITGGIAS…SALLSLANPR (196 aa)) folds into the DPCK domain. ATP is bound at residue 10 to 15 (ASGKST).

The protein belongs to the CoaE family.

The protein localises to the cytoplasm. It catalyses the reaction 3'-dephospho-CoA + ATP = ADP + CoA + H(+). It participates in cofactor biosynthesis; coenzyme A biosynthesis; CoA from (R)-pantothenate: step 5/5. Catalyzes the phosphorylation of the 3'-hydroxyl group of dephosphocoenzyme A to form coenzyme A. The protein is Dephospho-CoA kinase of Streptococcus pyogenes serotype M3 (strain ATCC BAA-595 / MGAS315).